A 256-amino-acid polypeptide reads, in one-letter code: Probable aquaporin TIP5-1 (256 aa).

Residue Met1 is modified to N-acetylmethionine. 5 helical membrane-spanning segments follow: residues 24–44, 57–77, 89–109, 144–164, and 171–191; these read CYVS…GSVM, PFGV…SVYI, AVTF…MFYW, FGAS…VFTA, and LPLA…VLAA. Residues 87-89 carry the NPA 1 motif; it reads NPA. Positions 200–202 match the NPA 2 motif; sequence NPA. The helical transmembrane segment at 222–242 threads the bilayer; that stretch reads VGPLLGGATAALVYDNVVVPV. Ser249 carries the post-translational modification Phosphoserine.

This sequence belongs to the MIP/aquaporin (TC 1.A.8) family. TIP (TC 1.A.8.10) subfamily.

It localises to the membrane. In terms of biological role, potential aquaporin, which may facilitate the transport of water and small neutral solutes across cell membranes. This Arabidopsis thaliana (Mouse-ear cress) protein is Probable aquaporin TIP5-1 (TIP5-1).